We begin with the raw amino-acid sequence, 528 residues long: Aspartic proteinase-like protein 1 (528 aa).

Positions 1–22 are cleaved as a signal peptide; sequence MVSRSAFLLFCVLFLATEETLA. A Peptidase A1 domain is found at 100–449; sequence HYTWIDIGTP…DRENMKLGWS (350 aa). Asp-118 is a catalytic residue. Residues Asn-193 and Asn-217 are each glycosylated (N-linked (GlcNAc...) asparagine). The active site involves Asp-333. N-linked (GlcNAc...) asparagine glycans are attached at residues Asn-358 and Asn-391. The tract at residues 451-503 is disordered; the sequence is SKCQEDKIEPPQASPGSTSSPNPLPTDEQQSRGGHAVSPAIAGKTPSKTPSSS. Over residues 464-482 the composition is skewed to polar residues; sequence SPGSTSSPNPLPTDEQQSR. Over residues 494–503 the composition is skewed to low complexity; that stretch reads KTPSKTPSSS. A lipid anchor (GPI-anchor amidated serine) is attached at Ser-503. Positions 504–528 are cleaved as a propeptide — removed in mature form; that stretch reads SSYSFSSIMRLFNSLLLLHWLASLM.

Belongs to the peptidase A1 family.

The protein resides in the cell membrane. This Arabidopsis thaliana (Mouse-ear cress) protein is Aspartic proteinase-like protein 1.